The primary structure comprises 331 residues: GTP 3',8-cyclase (331 aa).

A Radical SAM core domain is found at 1–231 (MNAVDYLRIS…DGQVQGNGPA (231 aa)). Arg8 is a GTP binding site. [4Fe-4S] cluster is bound by residues Cys15 and Cys19. Tyr21 is an S-adenosyl-L-methionine binding site. Residue Cys22 participates in [4Fe-4S] cluster binding. Residue Arg60 coordinates GTP. An S-adenosyl-L-methionine-binding site is contributed by Gly64. GTP is bound at residue Thr91. Ser115 serves as a coordination point for S-adenosyl-L-methionine. Position 157 (Lys157) interacts with GTP. Met191 provides a ligand contact to S-adenosyl-L-methionine. Positions 254 and 257 each coordinate [4Fe-4S] cluster. 259-261 (RMR) contacts GTP. Cys271 is a [4Fe-4S] cluster binding site.

Belongs to the radical SAM superfamily. MoaA family. As to quaternary structure, monomer and homodimer. Requires [4Fe-4S] cluster as cofactor.

The enzyme catalyses GTP + AH2 + S-adenosyl-L-methionine = (8S)-3',8-cyclo-7,8-dihydroguanosine 5'-triphosphate + 5'-deoxyadenosine + L-methionine + A + H(+). It participates in cofactor biosynthesis; molybdopterin biosynthesis. Functionally, catalyzes the cyclization of GTP to (8S)-3',8-cyclo-7,8-dihydroguanosine 5'-triphosphate. The polypeptide is GTP 3',8-cyclase (Acaryochloris marina (strain MBIC 11017)).